A 131-amino-acid polypeptide reads, in one-letter code: Acidic leucine-rich nuclear phosphoprotein 32 family member D (131 aa).

LRR repeat units follow at residues 18–38, 43–64, 65–87, 89–110, and 114–131; these read DVKE…EGLT, ELEL…PKLN, KLKK…AEKC, NLIH…EPLK, and NLES…LNNY.

This sequence belongs to the ANP32 family.

The chain is Acidic leucine-rich nuclear phosphoprotein 32 family member D (ANP32D) from Homo sapiens (Human).